Consider the following 110-residue polypeptide: uncharacterized protein (110 aa).

This is an uncharacterized protein from Saccharomyces cerevisiae (strain ATCC 204508 / S288c) (Baker's yeast).